Consider the following 129-residue polypeptide: UPF0102 protein Cpar_0015 (129 aa).

The protein belongs to the UPF0102 family.

This chain is UPF0102 protein Cpar_0015, found in Chlorobaculum parvum (strain DSM 263 / NCIMB 8327) (Chlorobium vibrioforme subsp. thiosulfatophilum).